The sequence spans 348 residues: Mannonate dehydratase (348 aa).

Belongs to the mannonate dehydratase family. It depends on Fe(2+) as a cofactor. The cofactor is Mn(2+).

It catalyses the reaction D-mannonate = 2-dehydro-3-deoxy-D-gluconate + H2O. It participates in carbohydrate metabolism; pentose and glucuronate interconversion. Functionally, catalyzes the dehydration of D-mannonate. The protein is Mannonate dehydratase of Streptococcus agalactiae serotype Ia (strain ATCC 27591 / A909 / CDC SS700).